Consider the following 255-residue polypeptide: Ribonuclease PH (255 aa).

Residues R86 and G124–R126 contribute to the phosphate site.

It belongs to the RNase PH family. As to quaternary structure, homohexameric ring arranged as a trimer of dimers.

The enzyme catalyses tRNA(n+1) + phosphate = tRNA(n) + a ribonucleoside 5'-diphosphate. Its function is as follows. Phosphorolytic 3'-5' exoribonuclease that plays an important role in tRNA 3'-end maturation. Removes nucleotide residues following the 3'-CCA terminus of tRNAs; can also add nucleotides to the ends of RNA molecules by using nucleoside diphosphates as substrates, but this may not be physiologically important. Probably plays a role in initiation of 16S rRNA degradation (leading to ribosome degradation) during starvation. This chain is Ribonuclease PH, found in Geobacillus thermodenitrificans (strain NG80-2).